Consider the following 175-residue polypeptide: Large ribosomal subunit protein eL14 (175 aa).

The segment at 150–175 is disordered; the sequence is KAAKMDSTEGAKRRMQKAIAARKAKK. Residues 152-161 are compositionally biased toward basic and acidic residues; that stretch reads AKMDSTEGAK. A compositionally biased stretch (basic residues) spans 162–175; the sequence is RRMQKAIAARKAKK.

This sequence belongs to the eukaryotic ribosomal protein eL14 family.

Functionally, component of the large ribosomal subunit. The ribosome is a large ribonucleoprotein complex responsible for the synthesis of proteins in the cell. This Leishmania donovani protein is Large ribosomal subunit protein eL14 (RPL14).